The following is a 1158-amino-acid chain: MIHQITRAGKSLLAAGCTLSILFASDSYAATALNVSQQPLFLTQGVAPNLLFTLDDSGSMAWAYVPDGISGNSGRAGRSSDYNALYYNPDYAYQVPKKLTLSGDQIIVSDYPVPRFTAAWQDGYAQGSTTNLSNNYRPQWGTGWLGCIDSSCNTGRAYYYTYKVSASCPAQPVSSSNSCYTYNALPTSQESNFAIWYSYYRNRILATKTAANLAFYSLPENVRLTWGALNTCSIGANSRSCQNNALLQFNKQHKINFFNWLANSPASGGTPLHAALDRAGRFLQTNGTAYTTEDGKTYSCRASYHIMMTDGIWNGRNVTPGNLDNQNQTFPDSTLYRPQPPYADSNASSLADLAFKYWTTDLRPSIDNDLKPFMAYKSGDDSKDYWDPRNNPATWQHMVNFTVGLGLSYSLTLNSAPTWTGSTFGNYEELMAGSKAWPSVDNDAAPGNVYDLWHAAINSRGDFFSAESPDSLVQAFNKILTRISERNTSSSKPAMTSALQDDGTGDKLIRYSYQSSFASDKNWAGDLIRYKVESTSTGSTKTQEWSAGALLDNRAPATRNIYIASNSGTNRLKPFTWSNIEGSQLATWLNRNPDKDNQADTKGAQRVDFIRGQQNMDGFRQRQAVLGDIVHSSPAVVGPAQYLTYLANPIEPSGDYGTFKTEADQRSPRVYVGSNDGMLHGFNIKTGVEEFAFIPTAVFEKLNKLTGISYQGGAHQYFVDATPVVSDAFFDGAWHTVLIGTLGAGGRGLFALDVTKPDDVKLLWEYDSSTDSDLGYTFSKPTVARLHSGQWAVVTGNGYGSDNDKAALLLIDLKKGTLIKKLEVQSERGIANGLSTPRLADNNSDGIADYAYAGDLQGNIWRFDLIGNTRNDDPDTNTSINPFKPGDVDPSAFRVSFSGAPLFRARADNNTRQPITAPPTLVRHPSRKGYIVIVGTGKYFEDDDAQADTSRAMTLYGIWDRQTKGESANSTPTIDRNALTAQTMTTEANSTFGSVNRNIRLISQNPVKWYKDGATGTANSDVASYGWRLNLEVNSSKKGEMMIEDMFAAGQVLLLQTLTPNDDPCDSGSTSWTYGLNPYTGGRTSFTVFDLKRAGIVDSGSDYNGSVVSAFQQDGLGGLAITQNEQRQSEACTGDECIIFNPSDKSNGRQTWRVVEEK.

The first 29 residues, 1–29, serve as a signal peptide directing secretion; sequence MIHQITRAGKSLLAAGCTLSILFASDSYA. D841, N843, D845, I847, and D849 together coordinate Ca(2+).

The protein belongs to the PilY1 family.

The protein resides in the fimbrium. Its subcellular location is the membrane. The protein localises to the cytoplasm. It is found in the cytosol. Its function is as follows. Involved in pilus assembly, twitching motility and adhesion to host cells. Primes type IV pili (T4P) assembly and is required for inclusion of minor pilins PilV, PilW and PilX to the surface pili. Stabilizes assembled pilus fibers likely by antagonizing retraction mediated by PilT. Calcium-binding and calcium release by PilY1 seem to be essential for twitching motility and for regulation of pilus retraction dynamics of PilT. Regulates surface-activated virulence possibly by acting as a surface-attachment mechanosensor. This chain is Type IV pilus biogenesis factor PilY1, found in Pseudomonas aeruginosa (strain UCBPP-PA14).